Reading from the N-terminus, the 350-residue chain is Biotin synthase (350 aa).

Residues 54 to 278 (REIQLSTLLS…TMPQSYVRLS (225 aa)) enclose the Radical SAM core domain. Positions 69, 73, and 76 each coordinate [4Fe-4S] cluster. Residues Cys113, Cys144, Cys204, and Arg276 each contribute to the [2Fe-2S] cluster site.

The protein belongs to the radical SAM superfamily. Biotin synthase family. Homodimer. The cofactor is [4Fe-4S] cluster. [2Fe-2S] cluster serves as cofactor.

The enzyme catalyses (4R,5S)-dethiobiotin + (sulfur carrier)-SH + 2 reduced [2Fe-2S]-[ferredoxin] + 2 S-adenosyl-L-methionine = (sulfur carrier)-H + biotin + 2 5'-deoxyadenosine + 2 L-methionine + 2 oxidized [2Fe-2S]-[ferredoxin]. The protein operates within cofactor biosynthesis; biotin biosynthesis; biotin from 7,8-diaminononanoate: step 2/2. Catalyzes the conversion of dethiobiotin (DTB) to biotin by the insertion of a sulfur atom into dethiobiotin via a radical-based mechanism. The protein is Biotin synthase of Neisseria meningitidis serogroup C (strain 053442).